A 297-amino-acid chain; its full sequence is Aspartate carbamoyltransferase catalytic subunit (297 aa).

Arginine 49 and threonine 50 together coordinate carbamoyl phosphate. Lysine 77 is a binding site for L-aspartate. The carbamoyl phosphate site is built by arginine 99, histidine 129, and glutamine 132. L-aspartate contacts are provided by arginine 162 and arginine 215. Residues glycine 256 and proline 257 each contribute to the carbamoyl phosphate site.

This sequence belongs to the aspartate/ornithine carbamoyltransferase superfamily. ATCase family. Heterododecamer (2C3:3R2) of six catalytic PyrB chains organized as two trimers (C3), and six regulatory PyrI chains organized as three dimers (R2).

The enzyme catalyses carbamoyl phosphate + L-aspartate = N-carbamoyl-L-aspartate + phosphate + H(+). It functions in the pathway pyrimidine metabolism; UMP biosynthesis via de novo pathway; (S)-dihydroorotate from bicarbonate: step 2/3. In terms of biological role, catalyzes the condensation of carbamoyl phosphate and aspartate to form carbamoyl aspartate and inorganic phosphate, the committed step in the de novo pyrimidine nucleotide biosynthesis pathway. In Legionella pneumophila subsp. pneumophila (strain Philadelphia 1 / ATCC 33152 / DSM 7513), this protein is Aspartate carbamoyltransferase catalytic subunit.